A 427-amino-acid polypeptide reads, in one-letter code: Piwi protein (427 aa).

The tract at residues 38–167 is mid domain; that stretch reads PYEVPSLKYN…VQFVSKLGGK (130 aa). Residues 110–406 enclose the Piwi domain; that stretch reads GIMLVLPEYN…VAGIIANVNR (297 aa). The binds 5'-phosphorylated end of guide DNA stretch occupies residues 118–124; it reads YNTPLYY. The segment at 147–148 is binds target DNA; that stretch reads RN. Residues 150–155 form a binds guide DNA region; that stretch reads TFYVDN. Q159 and L427 together coordinate a divalent metal cation. The PIWI domain stretch occupies residues 168 to 427; it reads PWILNVDPEK…RSLQTNPWFL (260 aa).

It belongs to the argonaute family. Short pAgo subfamily. In terms of assembly, homodimer probably stabilized by DNA. Each subunit is capable of interacting with a DNA molecule. It depends on a divalent metal cation as a cofactor.

Might play a role in defense against invading genetic elements, using short nucleic acid sequences as guides to bind complementary target strands, resulting in slicing of the target nucleic acid. Binds nucleic acids with decreasing affinity in the following order; ssDNA, ssRNA, dsDNA, RNA-DNA, RNA-RNA. Association of the 5' seed region of the guide strand (nucleotides 2-7) with AfPiwi increases affinity for the corresponding target strand; the greatest increase in affinity is for guide DNA with target RNA. In Archaeoglobus fulgidus (strain ATCC 49558 / DSM 4304 / JCM 9628 / NBRC 100126 / VC-16), this protein is Piwi protein.